The sequence spans 454 residues: Epoxide hydrolase 1 (454 aa).

A helical transmembrane segment spans residues methionine 1 to lysine 21. Topologically, residues aspartate 22 to glutamine 454 are cytoplasmic. Catalysis depends on aspartate 226, which acts as the Nucleophile. Arginine 294 is subject to Dimethylated arginine. Catalysis depends on tyrosine 373, which acts as the Proton donor. Residue histidine 430 is the Proton acceptor of the active site.

The protein belongs to the peptidase S33 family.

It localises to the microsome membrane. The protein localises to the endoplasmic reticulum membrane. The enzyme catalyses cis-stilbene oxide + H2O = (1R,2R)-hydrobenzoin. It carries out the reaction 1-(4-methoxyphenyl)-N-methyl-N-[(3-methyloxetan-3-yl)methyl]methanamine + H2O = 2-{[(4-methoxybenzyl)(methyl)amino]methyl}-2-methylpropane-1,3-diol. It catalyses the reaction 8,9-epoxy-(5Z,11Z,14Z)-eicosatrienoate + H2O = 8,9-dihydroxy-(5Z,11Z,14Z)-eicosatrienoate. The catalysed reaction is 11,12-epoxy-(5Z,8Z,14Z)-eicosatrienoate + H2O = 11,12-dihydroxy-(5Z,8Z,14Z)-eicosatrienoate. The enzyme catalyses 2-(5Z,8Z,11Z,14Z-eicosatetraenoyl)-glycerol + H2O = glycerol + (5Z,8Z,11Z,14Z)-eicosatetraenoate + H(+). With respect to regulation, inhibited by 10-hydroxystearamide and methoxy-arachidonyl fluorophosphate. Biotransformation enzyme that catalyzes the hydrolysis of arene and aliphatic epoxides to less reactive and more water soluble dihydrodiols by the trans addition of water. May play a role in the metabolism of endogenous lipids such as epoxide-containing fatty acids. Metabolizes the abundant endocannabinoid 2-arachidonoylglycerol (2-AG) to free arachidonic acid (AA) and glycerol. Binds 20(S)-hydroxycholesterol (20(S)-OHC). The sequence is that of Epoxide hydrolase 1 (EPHX1) from Sus scrofa (Pig).